A 488-amino-acid chain; its full sequence is MKYRDLRDFISKLEADGELRRVDVEVDPRLEMTEVCDRTLRAEGPAILFQKPKGYRMPVLGNLFGTPRRVALGMGAEDVSALREIGELLAFLRQPEPPKGLRDAWSQLPVFRKVLDMGPKKVRRAACQEVVVEGDDVDLGRLPVQTCWPGDAGPLITWALVVTRGPEKERQNLGIYRNQVIGRNRTIMRWLAHRGGALDFRDWQRERPGEPFPVAIALGADPATILGAVTPVPDSLSEYGFAGLLRGSKTELVKCLGPDLQVPASAEIVLEGHIHPDDTAPEGPFGDHTGYYNEVDHFPVFTVDRITHRRDPIYHSTYTGRPPDEPAILGVALNEVFVPILRKQFPEISDFYLPPEGCSYRMAVVTMKKQYPGHAKRVMLGVWSFLRQFMYTKFVIVTDDDVNARDWKDVIWAMTTRMDPKRDTVMIDNTPIDYLDFASPVSGLGSKIGFDATHKWPGETDREWGRPIVMDDETRARVDALWPKLGLD.

Position 172 (N172) interacts with Mn(2+). Residues 175–177, 189–191, and 194–195 contribute to the prenylated FMN site; these read IYR, RWL, and RG. Position 238 (E238) interacts with Mn(2+). The Proton donor role is filled by D287.

It belongs to the UbiD family. Homohexamer. It depends on prenylated FMN as a cofactor. Mn(2+) is required as a cofactor.

The protein localises to the cell membrane. It carries out the reaction a 4-hydroxy-3-(all-trans-polyprenyl)benzoate + H(+) = a 2-(all-trans-polyprenyl)phenol + CO2. It participates in cofactor biosynthesis; ubiquinone biosynthesis. Catalyzes the decarboxylation of 3-octaprenyl-4-hydroxy benzoate to 2-octaprenylphenol, an intermediate step in ubiquinone biosynthesis. The polypeptide is 3-octaprenyl-4-hydroxybenzoate carboxy-lyase (Alkalilimnicola ehrlichii (strain ATCC BAA-1101 / DSM 17681 / MLHE-1)).